The chain runs to 523 residues: 2-isopropylmalate synthase (523 aa).

Residues 5 to 267 (VIIFDTTLRD…HTAINHQEIW (263 aa)) enclose the Pyruvate carboxyltransferase domain. Mn(2+) contacts are provided by D14, H202, H204, and N238. The interval 392 to 523 (RLDYFSVQSG…QHNENNKETV (132 aa)) is regulatory domain.

The protein belongs to the alpha-IPM synthase/homocitrate synthase family. LeuA type 1 subfamily. In terms of assembly, homodimer. Requires Mn(2+) as cofactor.

The protein resides in the cytoplasm. It carries out the reaction 3-methyl-2-oxobutanoate + acetyl-CoA + H2O = (2S)-2-isopropylmalate + CoA + H(+). It participates in amino-acid biosynthesis; L-leucine biosynthesis; L-leucine from 3-methyl-2-oxobutanoate: step 1/4. Functionally, catalyzes the condensation of the acetyl group of acetyl-CoA with 3-methyl-2-oxobutanoate (2-ketoisovalerate) to form 3-carboxy-3-hydroxy-4-methylpentanoate (2-isopropylmalate). The chain is 2-isopropylmalate synthase from Escherichia coli O45:K1 (strain S88 / ExPEC).